Consider the following 737-residue polypeptide: UPF0507 protein YML002W (737 aa).

Residues 1 to 83 (MDSHQLELPD…FEDFNKNTGN (83 aa)) enclose the VPS9 domain.

It belongs to the UPF0507 family.

This is UPF0507 protein YML002W from Saccharomyces cerevisiae (strain ATCC 204508 / S288c) (Baker's yeast).